The following is a 157-amino-acid chain: Ribosomal RNA large subunit methyltransferase H (157 aa).

S-adenosyl-L-methionine-binding positions include leucine 74, glycine 106, and 125 to 130; that span reads LGNITF.

This sequence belongs to the RNA methyltransferase RlmH family. Homodimer.

It is found in the cytoplasm. It carries out the reaction pseudouridine(1915) in 23S rRNA + S-adenosyl-L-methionine = N(3)-methylpseudouridine(1915) in 23S rRNA + S-adenosyl-L-homocysteine + H(+). In terms of biological role, specifically methylates the pseudouridine at position 1915 (m3Psi1915) in 23S rRNA. This is Ribosomal RNA large subunit methyltransferase H from Lawsonia intracellularis (strain PHE/MN1-00).